A 334-amino-acid polypeptide reads, in one-letter code: Probable type II restriction enzyme HindVP (334 aa).

It catalyses the reaction Endonucleolytic cleavage of DNA to give specific double-stranded fragments with terminal 5'-phosphates.. Functionally, a P subtype restriction enzyme that recognizes the double-stranded sequence 5'-GRCGYC-3'; the cleavage site is unknown. The protein is Probable type II restriction enzyme HindVP (hindVRP) of Haemophilus influenzae (strain ATCC 51907 / DSM 11121 / KW20 / Rd).